A 579-amino-acid chain; its full sequence is Folliculin (579 aa).

The tract at residues G32 to C82 is disordered. Phosphoserine occurs at positions 62 and 73. The segment covering P63 to P76 has biased composition (low complexity). Residues R86 to T242 enclose the uDENN FLCN/SMCR8-type domain. Residues Q285–K309 adopt a coiled-coil conformation. The span at E294–E308 shows a compositional bias: acidic residues. The disordered stretch occupies residues E294–E321. Phosphoserine occurs at positions 302, 406, 537, 542, and 571. One can recognise a cDENN FLCN/SMCR8-type domain in the interval Q339 to T491. Residues Q493 to S558 form the dDENN FLCN/SMCR8-type domain.

Belongs to the folliculin family. In terms of assembly, interacts (via C-terminus) with FNIP1 or FNIP2 (via C-terminus). Component of the lysosomal folliculin complex (LFC), composed of FLCN, FNIP1 (or FNIP2), RagA/RRAGA or RagB/RRAGB GDP-bound, RagC/RRAGC or RagD/RRAGD GTP-bound, and Ragulator. Interaction with FNIP1 or FNIP2 mediates indirect interaction with the PRKAA1, PRKAB1 and PRKAG1 subunits of 5'-AMP-activated protein kinase (AMPK). Interacts with HSP90AA1 in the presence of FNIP1. Interacts with HSP70, STUB1, CDC37, AHSA1, CCT2, STIP1, PTGES3 and PPP5C. Interacts with GABARAP; interaction takes place in the presence of FNIP1 and/or FNIP2. Interacts with RILP; the interaction is direct and promotes association between RILP and RAB34. Interacts with KIF3A and KIF3B. Interacts with lactate dehydrogenase LDHA, but not LDHB; the interaction is direct, may preferentially bind LDHA dimers rather than tetramers, and regulates LDHA activity, acting as an uncompetitive inhibitor. Phosphorylation by ULK1 modulates the interaction with GABARAP and is required to regulate autophagy.

Its subcellular location is the lysosome membrane. It is found in the cytoplasm. The protein localises to the cytosol. The protein resides in the cell projection. It localises to the cilium. Its subcellular location is the cytoskeleton. It is found in the microtubule organizing center. The protein localises to the centrosome. The protein resides in the spindle. It localises to the nucleus. GTPase-activating activity is inhibited in the folliculin complex (LFC), which stabilizes the GDP-bound state of RagA/RRAGA (or RagB/RRAGB), because Arg-164 is located far from the RagC/RRAGC or RagD/RRAGD nucleotide pocket. Disassembly of the LFC complex upon amino acid restimulation liberates the GTPase-activating activity. Multi-functional protein, involved in both the cellular response to amino acid availability and in the regulation of glycolysis. GTPase-activating protein that plays a key role in the cellular response to amino acid availability through regulation of the non-canonical mTORC1 signaling cascade controlling the MiT/TFE factors TFEB and TFE3. Activates mTORC1 by acting as a GTPase-activating protein: specifically stimulates GTP hydrolysis by RagC/RRAGC or RagD/RRAGD, promoting the conversion to the GDP-bound state of RagC/RRAGC or RagD/RRAGD, and thereby activating the kinase activity of mTORC1. The GTPase-activating activity is inhibited during starvation and activated in presence of nutrients. Acts as a key component for non-canonical mTORC1-dependent control of the MiT/TFE factors TFEB and TFE3, while it is not involved in mTORC1-dependent phosphorylation of canonical RPS6KB1/S6K1 and EIF4EBP1/4E-BP1. In low-amino acid conditions, the lysosomal folliculin complex (LFC) is formed on the membrane of lysosomes, which inhibits the GTPase-activating activity of FLCN, inactivates mTORC1 and maximizes nuclear translocation of TFEB and TFE3. Upon amino acid restimulation, RagA/RRAGA (or RagB/RRAGB) nucleotide exchange promotes disassembly of the LFC complex and liberates the GTPase-activating activity of FLCN, leading to activation of mTORC1 and subsequent cytoplasmic retention of TFEB and TFE3. Indirectly acts as a positive regulator of Wnt signaling by promoting mTOR-dependent cytoplasmic retention of MiT/TFE factor TFE3. Required for the exit of hematopoietic stem cell from pluripotency by promoting mTOR-dependent cytoplasmic retention of TFE3, thereby increasing Wnt signaling. Involved in the control of embryonic stem cells differentiation; together with LAMTOR1 it is necessary to recruit and activate RagC/RRAGC and RagD/RRAGD at the lysosomes, and to induce exit of embryonic stem cells from pluripotency via non-canonical, mTOR-independent TFE3 inactivation. Acts as an inhibitor of browning of adipose tissue by regulating mTOR-dependent cytoplasmic retention of TFE3. In response to flow stress, regulates STK11/LKB1 accumulation and mTORC1 activation through primary cilia: may act by recruiting STK11/LKB1 to primary cilia for activation of AMPK resided at basal bodies, causing mTORC1 down-regulation. Together with FNIP1 and/or FNIP2, regulates autophagy: following phosphorylation by ULK1, interacts with GABARAP and promotes autophagy. Required for starvation-induced perinuclear clustering of lysosomes by promoting association of RILP with its effector RAB34. Regulates glycolysis by binding to lactate dehydrogenase LDHA, acting as an uncompetitive inhibitor. The protein is Folliculin of Bos taurus (Bovine).